We begin with the raw amino-acid sequence, 233 residues long: Cell number regulator 8 (233 aa).

The next 2 helical transmembrane spans lie at 85-101 (VCLL…GSNV) and 115-138 (CLPY…APWF).

It belongs to the cornifelin family. Expressed in roots, coleoptiles, leaves, stalks, apical meristems, immature ears, embryos, endosperm, pericarp, silks, tassel spikelets and pollen. Highest expression in the pericarp and stalks.

The protein localises to the membrane. This is Cell number regulator 8 (CNR8) from Zea mays (Maize).